Reading from the N-terminus, the 555-residue chain is Lysine--tRNA ligase (555 aa).

Positions 37 to 45 match the 'HIGH' region motif; it reads TSGRLHVGN. The short motif at 301 to 305 is the 'KMSKS' region element; the sequence is AMSSS.

This sequence belongs to the class-I aminoacyl-tRNA synthetase family.

It localises to the cytoplasm. It catalyses the reaction tRNA(Lys) + L-lysine + ATP = L-lysyl-tRNA(Lys) + AMP + diphosphate. The polypeptide is Lysine--tRNA ligase (Methanopyrus kandleri (strain AV19 / DSM 6324 / JCM 9639 / NBRC 100938)).